Reading from the N-terminus, the 388-residue chain is MKIHEYQGKEILRKFGVAVPRGKPAFSVDEAVKVAEELGGPVWVVKAQIHAGGRGKGGGVKVAKSIEQVREYANQILGMQLVTHQTGPEGQKVNRLMIEEGADIKQELYVSLVVDRISQKIVLMGSSEGGMDIEEVAEKHPELIHKVIVEPSTGLLDAQADDLAAKIGVPAASIPQARAILQGLYKAFWETDASLAEINPLNVSGDGKVTALDAKFNFDSNALFRHPEIVAYRDLDEEDPAEIEASKFDLAYISLDGNIGCLVNGAGLAMATMDTIKLFGGEPANFLDVGGGATTEKVTEAFKLMLKNPDLKAILVNIFGGIMRCDVIAEGVIAGSKAVNLNVPLVVRMKGTNEDLGKKMLADSGLPIISADSMEEAAQKVVAAAAGK.

The ATP-grasp domain occupies 9–244; sequence KEILRKFGVA…LDEEDPAEIE (236 aa). ATP contacts are provided by residues Lys-46, 53–55, Glu-99, Ala-102, and Glu-107; that span reads GRG. Mg(2+) is bound by residues Asn-199 and Asp-213. Substrate contacts are provided by residues Asn-264 and 321–323; that span reads GIM.

This sequence belongs to the succinate/malate CoA ligase beta subunit family. In terms of assembly, heterotetramer of two alpha and two beta subunits. Mg(2+) is required as a cofactor.

The enzyme catalyses succinate + ATP + CoA = succinyl-CoA + ADP + phosphate. It carries out the reaction GTP + succinate + CoA = succinyl-CoA + GDP + phosphate. It functions in the pathway carbohydrate metabolism; tricarboxylic acid cycle; succinate from succinyl-CoA (ligase route): step 1/1. Functionally, succinyl-CoA synthetase functions in the citric acid cycle (TCA), coupling the hydrolysis of succinyl-CoA to the synthesis of either ATP or GTP and thus represents the only step of substrate-level phosphorylation in the TCA. The beta subunit provides nucleotide specificity of the enzyme and binds the substrate succinate, while the binding sites for coenzyme A and phosphate are found in the alpha subunit. This is Succinate--CoA ligase [ADP-forming] subunit beta from Burkholderia cenocepacia (strain HI2424).